Reading from the N-terminus, the 355-residue chain is 3-dehydroquinate synthase (355 aa).

Residues 98-102 (GVIGD), 122-123 (TT), Lys135, Lys144, and 162-165 (TLNT) each bind NAD(+). Glu177, His240, and His257 together coordinate Zn(2+).

Belongs to the sugar phosphate cyclases superfamily. Dehydroquinate synthase family. Requires Co(2+) as cofactor. The cofactor is Zn(2+). NAD(+) is required as a cofactor.

It localises to the cytoplasm. The enzyme catalyses 7-phospho-2-dehydro-3-deoxy-D-arabino-heptonate = 3-dehydroquinate + phosphate. The protein operates within metabolic intermediate biosynthesis; chorismate biosynthesis; chorismate from D-erythrose 4-phosphate and phosphoenolpyruvate: step 2/7. Its function is as follows. Catalyzes the conversion of 3-deoxy-D-arabino-heptulosonate 7-phosphate (DAHP) to dehydroquinate (DHQ). This Dictyoglomus thermophilum (strain ATCC 35947 / DSM 3960 / H-6-12) protein is 3-dehydroquinate synthase.